Consider the following 605-residue polypeptide: Microtubule-associated protein VP10 (605 aa).

As to quaternary structure, interacts with VP1.

The protein localises to the virion. The protein resides in the host cytoplasm. It is found in the host cytoskeleton. Minor inner capsid component. Displays NTPase and RNA 5'-triphosphatase (RTPase) activities. May function as a cofactor of polymerase VP1. Associates with microtubules and plays a role in the formation, structural organization and morphology of viral inclusions, where the assembly of cores and the replication of viral RNA occur. This Colorado tick fever virus (strain USA/Florio N-7180) (CTFV) protein is Microtubule-associated protein VP10.